The following is a 185-amino-acid chain: Stathmin-4 (185 aa).

The SLD domain maps to 48–185 (SDMEVIELNK…EVRKNKEATR (138 aa)). Residues 90–185 (SLEEIQKKLE…EVRKNKEATR (96 aa)) are a coiled coil. Residues 165 to 185 (ERLQEKDKHAEEVRKNKEATR) are disordered. Over residues 166–185 (RLQEKDKHAEEVRKNKEATR) the composition is skewed to basic and acidic residues.

It belongs to the stathmin family. Nervous tissue.

The sequence is that of Stathmin-4 (stmn4) from Xenopus laevis (African clawed frog).